The following is a 250-amino-acid chain: Aquaporin SIP2-1 (250 aa).

The next 2 membrane-spanning stretches (helical) occupy residues 14 to 34 and 55 to 75; these read PWLV…GALV and VALS…TGGA. The NPA 1 signature appears at 78–80; that stretch reads NPL. Helical transmembrane passes span 95-115, 132-152, 178-200, and 211-231; these read LYLF…ILGV, SVGV…VVIV, FHLL…AWAY, and LLVY…VVTL. Residues 191-193 carry the NPA 2 motif; the sequence is NPA.

The protein belongs to the MIP/aquaporin (TC 1.A.8) family. SIP (TC 1.A.8.10) subfamily. As to expression, expressed in leaves and anthers, and at lower levels in roots.

It localises to the membrane. In terms of biological role, aquaporins facilitate the transport of water and small neutral solutes across cell membranes. This chain is Aquaporin SIP2-1 (SIP2-1), found in Oryza sativa subsp. japonica (Rice).